The sequence spans 255 residues: 4-diphosphocytidyl-2-C-methyl-D-erythritol kinase (255 aa).

Lys-6 is a catalytic residue. 95 to 105 (PVCAGLGGGSS) contacts ATP. Residue Asp-137 is part of the active site.

Belongs to the GHMP kinase family. IspE subfamily.

It catalyses the reaction 4-CDP-2-C-methyl-D-erythritol + ATP = 4-CDP-2-C-methyl-D-erythritol 2-phosphate + ADP + H(+). Its pathway is isoprenoid biosynthesis; isopentenyl diphosphate biosynthesis via DXP pathway; isopentenyl diphosphate from 1-deoxy-D-xylulose 5-phosphate: step 3/6. In terms of biological role, catalyzes the phosphorylation of the position 2 hydroxy group of 4-diphosphocytidyl-2C-methyl-D-erythritol. This Campylobacter jejuni subsp. jejuni serotype O:2 (strain ATCC 700819 / NCTC 11168) protein is 4-diphosphocytidyl-2-C-methyl-D-erythritol kinase.